The primary structure comprises 92 residues: MSESGGMVKSVHVIPLKRVYFGRRMNRADRAIRLVRKYVARHFKDAEKIILDPELNKYIWSCGREKPPRRVVVEIRFNKNEKEARVFLKRVK.

It belongs to the eukaryotic ribosomal protein eL31 family.

The polypeptide is Large ribosomal subunit protein eL31 (Desulfurococcus amylolyticus (strain DSM 18924 / JCM 16383 / VKM B-2413 / 1221n) (Desulfurococcus kamchatkensis)).